The primary structure comprises 367 residues: MGDFVFCYGLHNKNRLSKYIKQTKKGYKLYLDDDNHIKIKIETRSGQKYIVIDFNDSLDFLKFIVKKKIYCDEYKHDCNSLCLHNDYLEYVIENKHYDIVKFYCKKFVPLIKSNISVYPFSFSLFVDIDLDDFKYMFKYSCLEDINPYFIYVLGQSDNITIEFMDDIIGMYKSKLTRLFTNNKISDSNIDNIKIGLQDFIKPVYKKDDVNLFDFIIEEIHNLTSEIDKTKLYKKQLGFLKIFEFYYELDTKTINRFINYVLDCTCQKIFERLLFNLGNIDLLDKTIVRDILEFNMVEYMGIICDFIGDTNPELINKMLTKATSTEMAQLLIDCGADYEKLYKSQNFRKCNDCVKNFIKKLVKETSDS.

This sequence belongs to the mimivirus L17x/L18x family.

This is an uncharacterized protein from Acanthamoeba polyphaga (Amoeba).